The sequence spans 156 residues: MKTISLVYISLSGNTESFVTRLKDYLLSQYKGIEVQKIHIKDLVKEGKNFYEMDHPYVAFLPTYLEGGNGVDNGDVEILTTPVGDFIAYGNNASKCFGVVGSGNRNFNNQYCLTAKQYSQRFGFPVLADFEMRGMLEDIKHVAAIIADLYELEKEN.

The protein belongs to the NrdI family.

The polypeptide is Putative NrdI-like protein (Streptococcus pneumoniae serotype 4 (strain ATCC BAA-334 / TIGR4)).